The following is a 409-amino-acid chain: TAR DNA-binding protein 43 (409 aa).

RRM domains follow at residues 105–200 and 191–262; these read SDLI…RCTE and RKVF…TAEP. 2 disordered regions span residues 260-302 and 341-409; these read AEPK…NQGG and SQQN…GWGM. Positions 261–274 are enriched in basic and acidic residues; it reads EPKHNNNRQLERGG. The segment covering 281 to 292 has biased composition (polar residues); that stretch reads FGNQGYPNSRPS. Composition is skewed to low complexity over residues 341–387 and 395–409; these read SQQN…PNAG and GFSSSMESKSSGWGM.

Homodimer.

It is found in the nucleus. Its subcellular location is the cytoplasm. The protein resides in the stress granule. It localises to the mitochondrion. Functionally, probably involved in transcriptional repression. May play a role in the maintenance of the circadian clock periodicity. In Xenopus tropicalis (Western clawed frog), this protein is TAR DNA-binding protein 43 (tardbp).